Reading from the N-terminus, the 311-residue chain is Methionyl-tRNA formyltransferase (311 aa).

A (6S)-5,6,7,8-tetrahydrofolate-binding site is contributed by 110 to 113; it reads SLLP.

It belongs to the Fmt family.

It catalyses the reaction L-methionyl-tRNA(fMet) + (6R)-10-formyltetrahydrofolate = N-formyl-L-methionyl-tRNA(fMet) + (6S)-5,6,7,8-tetrahydrofolate + H(+). In terms of biological role, attaches a formyl group to the free amino group of methionyl-tRNA(fMet). The formyl group appears to play a dual role in the initiator identity of N-formylmethionyl-tRNA by promoting its recognition by IF2 and preventing the misappropriation of this tRNA by the elongation apparatus. The chain is Methionyl-tRNA formyltransferase from Streptococcus pneumoniae serotype 19F (strain G54).